The sequence spans 816 residues: Subtilisin-like protease SBT2.6 (816 aa).

A signal peptide spans 1 to 19 (MDIGCKVLVFFTCFLTVTA). Positions 20 to 126 (EIYIVTMEGE…VDRDWKVRKL (107 aa)) are cleaved as a propeptide — activation peptide. One can recognise an Inhibitor I9 domain in the interval 22-124 (YIVTMEGEPI…KSVDRDWKVR (103 aa)). Positions 120 to 672 (DWKVRKLTTH…SGHVNPSAAL (553 aa)) constitute a Peptidase S8 domain. Catalysis depends on charge relay system residues D160 and H235. The PA domain maps to 418 to 492 (DCQKPEVLNK…SCIPGILITD (75 aa)). Residues N504 and N578 are each glycosylated (N-linked (GlcNAc...) asparagine). Catalysis depends on S597, which acts as the Charge relay system. N702 carries an N-linked (GlcNAc...) asparagine glycan.

This sequence belongs to the peptidase S8 family.

The protein resides in the secreted. This chain is Subtilisin-like protease SBT2.6, found in Arabidopsis thaliana (Mouse-ear cress).